The following is an 829-amino-acid chain: Leucine--tRNA ligase (829 aa).

The short motif at 34-44 is the 'HIGH' region element; the sequence is PYPSGNIHMGH. Positions 591-595 match the 'KMSKS' region motif; sequence KMSKS. Lys-594 contributes to the ATP binding site.

Belongs to the class-I aminoacyl-tRNA synthetase family.

Its subcellular location is the cytoplasm. It catalyses the reaction tRNA(Leu) + L-leucine + ATP = L-leucyl-tRNA(Leu) + AMP + diphosphate. This is Leucine--tRNA ligase from Ehrlichia canis (strain Jake).